Consider the following 318-residue polypeptide: MANEMEFEKPILELKSKIADLKEYNETSDVDLTNEIEKLEKRLAKLEASIYSNMTAWDKFQVARHPERPTTLDYISLLFEDFMELHGDRTFGDDAAIVGGIATFKGTPVTVIGHQRGKDTKDNLHRNFGMPHPEGFRKALRLMKQADKFGRPIICFIDTKGAYPGRAAEERGQSEAIARNLYEMSDMKVPIISIVIGEGGSGGALALGLGNQIFMLENAVFSVISPEGAAAILWKDASLAKKAAESMRITAGDLYELGITDGIIPEVKGGAHRDLAAQAEEINKTITKSLHALMAFSEEQLIEQRYDKFKKIGVYETL.

The CoA carboxyltransferase C-terminal domain occupies 38 to 292; that stretch reads KLEKRLAKLE…NKTITKSLHA (255 aa).

The protein belongs to the AccA family. As to quaternary structure, acetyl-CoA carboxylase is a heterohexamer composed of biotin carboxyl carrier protein (AccB), biotin carboxylase (AccC) and two subunits each of ACCase subunit alpha (AccA) and ACCase subunit beta (AccD).

Its subcellular location is the cytoplasm. It carries out the reaction N(6)-carboxybiotinyl-L-lysyl-[protein] + acetyl-CoA = N(6)-biotinyl-L-lysyl-[protein] + malonyl-CoA. It participates in lipid metabolism; malonyl-CoA biosynthesis; malonyl-CoA from acetyl-CoA: step 1/1. Component of the acetyl coenzyme A carboxylase (ACC) complex. First, biotin carboxylase catalyzes the carboxylation of biotin on its carrier protein (BCCP) and then the CO(2) group is transferred by the carboxyltransferase to acetyl-CoA to form malonyl-CoA. The polypeptide is Acetyl-coenzyme A carboxylase carboxyl transferase subunit alpha (Listeria innocua serovar 6a (strain ATCC BAA-680 / CLIP 11262)).